A 628-amino-acid chain; its full sequence is Kelch-like protein diablo (628 aa).

The disordered stretch occupies residues Met-1–His-56. Positions Pro-14–Asn-29 are enriched in low complexity. One can recognise a BTB domain in the interval Cys-74 to Glu-141. The BACK domain maps to Cys-176–Gly-278. Kelch repeat units follow at residues Val-325–Asp-371, Leu-373–Gly-419, Phe-420–Gly-466, Leu-468–Asn-513, Ile-515–Gly-560, and Gln-561–Ala-607.

It functions in the pathway protein modification; protein ubiquitination. Its function is as follows. Probable substrate-specific adapter of an E3 ubiquitin-protein ligase complex which mediates the ubiquitination and subsequent proteasomal degradation of target proteins. May have a role in synapse differentiation and growth. The polypeptide is Kelch-like protein diablo (Drosophila pseudoobscura pseudoobscura (Fruit fly)).